A 398-amino-acid chain; its full sequence is Phosphoglycerate kinase (398 aa).

Substrate contacts are provided by residues 23-25 (DFN), Arg38, 61-64 (HMGK), Arg122, and Arg155. ATP is bound by residues Lys206, Gly297, Glu328, and 354 to 357 (GGDS).

It belongs to the phosphoglycerate kinase family. As to quaternary structure, monomer.

It is found in the cytoplasm. The catalysed reaction is (2R)-3-phosphoglycerate + ATP = (2R)-3-phospho-glyceroyl phosphate + ADP. It functions in the pathway carbohydrate degradation; glycolysis; pyruvate from D-glyceraldehyde 3-phosphate: step 2/5. This chain is Phosphoglycerate kinase, found in Clostridium botulinum (strain Okra / Type B1).